Reading from the N-terminus, the 700-residue chain is AP-2 complex subunit beta (700 aa).

The tract at residues 625-700 is disordered; that stretch reads VGNSFPPTGA…RKLSMKRPFS (76 aa). S649 is modified (phosphoserine). T652 is subject to Phosphothreonine. The span at 653 to 663 shows a compositional bias: basic and acidic residues; sequence AMMDDYDKPAE. S683 carries the post-translational modification Phosphoserine.

Belongs to the adaptor complexes large subunit family. In terms of assembly, adaptor protein complex 2 (AP-2) is a heterotetramer composed of two large adaptins (alpha-type subunit APL3 and beta-type subunit APL1), a medium chain (mu-type subunit APM4) and a small adaptin (sigma-type subunit APS2). Interacts with APS2.

The protein localises to the cell membrane. It is found in the membrane. The protein resides in the coated pit. In terms of biological role, adaptins are components of the adaptor complexes which link clathrin to receptors in coated vesicles. Clathrin-associated protein complexes are believed to interact with the cytoplasmic tails of membrane proteins, leading to their selection and concentration. Beta adaptin is a subunit of the plasma membrane adaptor. The sequence is that of AP-2 complex subunit beta (APL1) from Saccharomyces cerevisiae (strain ATCC 204508 / S288c) (Baker's yeast).